A 559-amino-acid chain; its full sequence is Oxygen-dependent choline dehydrogenase (559 aa).

4 to 33 is an FAD binding site; it reads DYIIIGAGSAGNVLATRLTEDSDVTVLLLE. His473 acts as the Proton acceptor in catalysis.

The protein belongs to the GMC oxidoreductase family. Requires FAD as cofactor.

The enzyme catalyses choline + A = betaine aldehyde + AH2. It catalyses the reaction betaine aldehyde + NAD(+) + H2O = glycine betaine + NADH + 2 H(+). The protein operates within amine and polyamine biosynthesis; betaine biosynthesis via choline pathway; betaine aldehyde from choline (cytochrome c reductase route): step 1/1. Involved in the biosynthesis of the osmoprotectant glycine betaine. Catalyzes the oxidation of choline to betaine aldehyde and betaine aldehyde to glycine betaine at the same rate. The polypeptide is Oxygen-dependent choline dehydrogenase (Cronobacter sakazakii (strain ATCC BAA-894) (Enterobacter sakazakii)).